The chain runs to 184 residues: Probable RNA 2'-phosphotransferase (184 aa).

Belongs to the KptA/TPT1 family.

Removes the 2'-phosphate from RNA via an intermediate in which the phosphate is ADP-ribosylated by NAD followed by a presumed transesterification to release the RNA and generate ADP-ribose 1''-2''-cyclic phosphate (APPR&gt;P). May function as an ADP-ribosylase. This chain is Probable RNA 2'-phosphotransferase, found in Escherichia coli (strain 55989 / EAEC).